The following is a 337-amino-acid chain: Terpene cyclase (337 aa).

Residues 5 to 25 (ASVIFLSLSVLAAVGVWGPFV) traverse the membrane as a helical segment. N-linked (GlcNAc...) asparagine glycosylation is present at N65. The next 7 membrane-spanning stretches (helical) occupy residues 72 to 92 (IAYCFMMQFLANVAVIPVILC), 111 to 131 (GLLSQLGTSAVIYPLYAMSFI), 149 to 169 (ALILNMAMGYALPAAITLNVL), 177 to 197 (IWGILAFTVYPICMKLMARII), 222 to 242 (VAGGVALQGHLWYLGTELGIF), 267 to 287 (LQVDYAITFLAMLLLAWHELI), and 298 to 318 (LGGLIIGWILVGPGATLAAAW).

It belongs to the membrane-bound ascI terpene cyclase family.

Its subcellular location is the membrane. It participates in antifungal biosynthesis. In terms of biological role, cyclase; part of the gene cluster that mediates the biosynthesis of the tetrahydropyranyl antifungal agent lanomycin that acts as an inhibitor of CYP51 and blocks the ergosterol biosynthesis. The biosynthesis probably begins with the formation of an hexaketide, followed by methionine mediated alkylation of C-2 and C-6, and methylation of the reduced C-3 oxygen, pyran forming reductive ring closure, oxygenation of C-4, beta-keto reduction, enoyl reduction and dehydration of the remaining oxygens, and finally, acylation with glycine to complete the biosynthesis. This chain is Terpene cyclase, found in Pyrenophora dematioidea (Helminthosporium dematioideum).